The sequence spans 416 residues: MDKLLIEGGVRLAGEAAISGAKNAALPILCAALLTREPVTLTNVPQLNDIDTLLNLLGQMGVKVSRDNAAVTLDASAIDNPVAPYEMVKTMRASILVLGPLVARCGEARVSLPGGCAIGARPVDQHIKGLQAMGAQVTVEHGYVHAVVSRLAGARLFTDMVTVTGTENLMMAACLADGETVIENAAREPEVVDLANCLVAMGARISGAGTDVIRIRGVDRLNGATHRIMPDRIETGTYLCAAAATGGEIRLTRTSTAYLDAVVDKLMDAGCDVVTERDAIRLKAPARLTSVNIRTSPYPAFPTDMQAQFMAINAVASGAAMIRETIFENRFMHAVELQRLGADIRIDGNTAVVQGVERLQGATVMATDLRASASLVIAGLVAEGETVIERIYHLDRGYERLEEKLAALGAHVRRIA.

22-23 (KN) provides a ligand contact to phosphoenolpyruvate. Arg-92 lines the UDP-N-acetyl-alpha-D-glucosamine pocket. The Proton donor role is filled by Cys-116. At Cys-116 the chain carries 2-(S-cysteinyl)pyruvic acid O-phosphothioketal. Residues 121 to 125 (RPVDQ), Asp-304, and Ile-326 each bind UDP-N-acetyl-alpha-D-glucosamine.

This sequence belongs to the EPSP synthase family. MurA subfamily.

Its subcellular location is the cytoplasm. It carries out the reaction phosphoenolpyruvate + UDP-N-acetyl-alpha-D-glucosamine = UDP-N-acetyl-3-O-(1-carboxyvinyl)-alpha-D-glucosamine + phosphate. Its pathway is cell wall biogenesis; peptidoglycan biosynthesis. Cell wall formation. Adds enolpyruvyl to UDP-N-acetylglucosamine. This Aromatoleum aromaticum (strain DSM 19018 / LMG 30748 / EbN1) (Azoarcus sp. (strain EbN1)) protein is UDP-N-acetylglucosamine 1-carboxyvinyltransferase.